Here is a 135-residue protein sequence, read N- to C-terminus: MGLTYQLIPVLVCLLVCTSHFAHGHKCDITLAEIIKTLNILTTRKNSCMELPVADVFAAPKNTTEKETFCRAGIELRRIYRSHTCLNKFLGGLDRNLNSLASKTCSVNEAKTSTSTLKDLLEGLKTIMKEKYSKC.

A signal peptide spans 1–24 (MGLTYQLIPVLVCLLVCTSHFAHG). Cystine bridges form between cysteine 27/cysteine 135, cysteine 48/cysteine 85, and cysteine 70/cysteine 105. Residue asparagine 62 is glycosylated (N-linked (GlcNAc...) asparagine).

Belongs to the IL-4/IL-13 family.

It is found in the secreted. Functionally, participates in at least several B-cell activation processes as well as of other cell types. It is a costimulator of DNA-synthesis. It induces the expression of class II MHC molecules on resting B-cells. It enhances both secretion and cell surface expression of IgE and IgG1. It also regulates the expression of the low affinity Fc receptor for IgE (CD23) on both lymphocytes and monocytes. Positively regulates IL31RA expression in macrophages. Stimulates autophagy in dendritic cells by interfering with mTORC1 signaling and through the induction of RUFY4. In Boselaphus tragocamelus (Nilgai), this protein is Interleukin-4 (IL4).